A 236-amino-acid polypeptide reads, in one-letter code: UPF0173 metal-dependent hydrolase AZC_2841 (236 aa).

This sequence belongs to the UPF0173 family.

The protein is UPF0173 metal-dependent hydrolase AZC_2841 of Azorhizobium caulinodans (strain ATCC 43989 / DSM 5975 / JCM 20966 / LMG 6465 / NBRC 14845 / NCIMB 13405 / ORS 571).